The following is a 548-amino-acid chain: uncharacterized protein (548 aa).

Short-chain dehydrogenase/reductase regions lie at residues 1–250 (MDDR…WMSV) and 271–548 (PVED…LLSP). NADP(+) is bound at residue 12–37 (IVVTGAAGGIGRALVDIFAANGDVVV). Serine 141 serves as a coordination point for substrate. The active-site Proton acceptor is tyrosine 154. 280-304 (VIVMGGATGVGAAIARRFAENGDTV) is a binding site for NADP(+). Tyrosine 420 functions as the Proton acceptor in the catalytic mechanism.

Belongs to the short-chain dehydrogenases/reductases (SDR) family.

This is an uncharacterized protein from Sinorhizobium fredii (strain NBRC 101917 / NGR234).